The following is a 468-amino-acid chain: E3 ubiquitin-protein ligase RGLG2 (468 aa).

The disordered stretch occupies residues 1–89; it reads MGTGNSKENW…PSQSYGSDNK (89 aa). A lipid anchor (N-myristoyl glycine) is attached at Gly2. Residues 12 to 45 show a composition bias toward low complexity; that stretch reads QSSFRSTSASSASPSSSSWASQQSYPQYGAESYN. A compositionally biased stretch (pro residues) spans 46-65; the sequence is YPPPPSYAQPPEYTQPPPPL. A compositionally biased stretch (low complexity) spans 66-84; it reads YSTQPYSAPSYSAPPSQSY. In terms of domain architecture, VWFA spans 122 to 342; it reads NLIVGIDFTK…KETEFALSAL (221 aa). Residues 369 to 416 are disordered; sequence FPLPPPMRGGSSSYNSPKPSRLPSFKPSVPPHPTEGYHVRSSPVPPPT. The RING-type zinc finger occupies 425–458; it reads CPICLSNPKDMAFGCGHQTCCECGPDLQMCPICR.

In terms of assembly, interacts with the heterodimer UBC35/UEV1B, UBC35 alone, PIN1, but not with UCB2, UCB9, UEV1B or UEV1C alone. Interacts with ERF053. In terms of processing, N-myristoylated. In terms of tissue distribution, ubiquitously expressed.

The protein localises to the cell membrane. The protein resides in the nucleus. The enzyme catalyses S-ubiquitinyl-[E2 ubiquitin-conjugating enzyme]-L-cysteine + [acceptor protein]-L-lysine = [E2 ubiquitin-conjugating enzyme]-L-cysteine + N(6)-ubiquitinyl-[acceptor protein]-L-lysine.. Functionally, E3 ubiquitin-protein ligase that mediates the formation of 'Lys-63'-linked ubiquitin chains. Regulates apical dominance by acting on the auxin transport proteins abundance. Mediates ubiquitination and subsequent proteasomal degradation of ERF053 in response to drought stress. Acts as a negative regulator of drought stress response. The sequence is that of E3 ubiquitin-protein ligase RGLG2 from Arabidopsis thaliana (Mouse-ear cress).